Here is a 172-residue protein sequence, read N- to C-terminus: Hemagglutinin/amebocyte aggregation factor (172 aa).

The N-terminal stretch at 1-19 is a signal peptide; sequence MNSPAIVIIIFSTLTFSEA. Tandem repeats lie at residues 21–25, 50–54, 73–77, and 102–106. 5 disulfide bridges follow: C32-C58, C67-C172, C84-C110, C111-C117, and C123-C167. 2 repeat units span residues 129–133 and 158–162.

This sequence belongs to the dermatopontin family.

The protein localises to the secreted. Functionally, possesses the property of inducing both aggregation of amebocytes and agglutination of erythrocytes. The polypeptide is Hemagglutinin/amebocyte aggregation factor (Limulus polyphemus (Atlantic horseshoe crab)).